The chain runs to 301 residues: GTPase Era (301 aa).

The 168-residue stretch at 6–173 folds into the Era-type G domain; that stretch reads KSGFVAIVGR…LEQTNANLEI (168 aa). A G1 region spans residues 14–21; sequence GRPNVGKS. 14–21 is a GTP binding site; the sequence is GRPNVGKS. The interval 40 to 44 is G2; that stretch reads QTTRN. Residues 61 to 64 form a G3 region; it reads DTPG. GTP-binding positions include 61 to 65 and 123 to 126; these read DTPGI and NKID. The segment at 123-126 is G4; that stretch reads NKID. The tract at residues 152-154 is G5; it reads ISA. In terms of domain architecture, KH type-2 spans 204 to 282; that stretch reads TREEVPHSVA…FLEIWVKVQK (79 aa).

It belongs to the TRAFAC class TrmE-Era-EngA-EngB-Septin-like GTPase superfamily. Era GTPase family. In terms of assembly, monomer.

It is found in the cytoplasm. The protein localises to the cell membrane. Functionally, an essential GTPase that binds both GDP and GTP, with rapid nucleotide exchange. Plays a role in 16S rRNA processing and 30S ribosomal subunit biogenesis and possibly also in cell cycle regulation and energy metabolism. The polypeptide is GTPase Era (Listeria innocua serovar 6a (strain ATCC BAA-680 / CLIP 11262)).